Reading from the N-terminus, the 742-residue chain is Phosphoribosylformylglycinamidine synthase subunit PurL (742 aa).

Residue His54 is part of the active site. Residues Tyr57 and Lys96 each coordinate ATP. A Mg(2+)-binding site is contributed by Glu98. Substrate-binding positions include 99-102 and Arg121; that span reads SHNH. His100 functions as the Proton acceptor in the catalytic mechanism. Mg(2+) is bound at residue Asp122. Gly225 and Gln245 together coordinate substrate. Asp273 serves as a coordination point for Mg(2+). Position 317–319 (317–319) interacts with substrate; sequence ESQ. Gly537 is an ATP binding site. Asn538 is a binding site for Mg(2+). Ser540 lines the substrate pocket.

The protein belongs to the FGAMS family. Monomer. Part of the FGAM synthase complex composed of 1 PurL, 1 PurQ and 2 PurS subunits.

It is found in the cytoplasm. The catalysed reaction is N(2)-formyl-N(1)-(5-phospho-beta-D-ribosyl)glycinamide + L-glutamine + ATP + H2O = 2-formamido-N(1)-(5-O-phospho-beta-D-ribosyl)acetamidine + L-glutamate + ADP + phosphate + H(+). The enzyme catalyses L-glutamine + H2O = L-glutamate + NH4(+). It functions in the pathway purine metabolism; IMP biosynthesis via de novo pathway; 5-amino-1-(5-phospho-D-ribosyl)imidazole from N(2)-formyl-N(1)-(5-phospho-D-ribosyl)glycinamide: step 1/2. Functionally, part of the phosphoribosylformylglycinamidine synthase complex involved in the purines biosynthetic pathway. Catalyzes the ATP-dependent conversion of formylglycinamide ribonucleotide (FGAR) and glutamine to yield formylglycinamidine ribonucleotide (FGAM) and glutamate. The FGAM synthase complex is composed of three subunits. PurQ produces an ammonia molecule by converting glutamine to glutamate. PurL transfers the ammonia molecule to FGAR to form FGAM in an ATP-dependent manner. PurS interacts with PurQ and PurL and is thought to assist in the transfer of the ammonia molecule from PurQ to PurL. In Bacillus subtilis (strain 168), this protein is Phosphoribosylformylglycinamidine synthase subunit PurL.